Here is a 544-residue protein sequence, read N- to C-terminus: MAKFVFITGGVVSSIGKGIVAASLGRLLKSRNYTVSILKLDPYINVDPGTMSPYQHGEVFVTDDGAETDLDLGHYERFTDTNMSKLNNVTTGAIYQAVIYKERRGDYQGSTVQVIPHVTQEIKERIRRVARETNPDVVLVEVGGTVGDIESLPFLEAIRQFRKDVGRANVAYVHVTLVPLIKAAGEMKTKPTQHSVKELRSIGIQPDVLVCRCEQPLPRSIKEKISEFCDVPVECVIQAQDAPSIYDVPLVLEQEGLAQRVLQILNLEPQQPDLREWELLVQRLHHPQEQVEIAIVGKYVRLTDAYLSVAEALRHAGLALNAGVTLRWISSEEVEERGPEALLADVDGVVVPGGFGSRGIEGKVATIRYVRERGIPFLGLCLGMQCAVIDWGCNIAGLERANSYEFDPDTPHPVISLLPEQKDVEHLGGTLRLGLYPCRILPDTLAAKLYGESIVYERHRHRYEFNNAYRSLFLESGYVISGVSPDNRLVEIIELPSHPFFIATQFHPEFRSRPNRPHPLFLGLIEAALRSRSRPQALQLQNTG.

Residues 1 to 267 (MAKFVFITGG…AQRVLQILNL (267 aa)) form an amidoligase domain region. Residue serine 13 coordinates CTP. Serine 13 is a binding site for UTP. 14–19 (SIGKGI) contributes to the ATP binding site. Tyrosine 54 serves as a coordination point for L-glutamine. Aspartate 71 is a binding site for ATP. Residues aspartate 71 and glutamate 141 each coordinate Mg(2+). Residues 148-150 (DIE), 188-193 (KTKPTQ), and lysine 224 contribute to the CTP site. UTP contacts are provided by residues 188 to 193 (KTKPTQ) and lysine 224. The region spanning 292-534 (EIAIVGKYVR…IEAALRSRSR (243 aa)) is the Glutamine amidotransferase type-1 domain. Glycine 354 contacts L-glutamine. The active-site Nucleophile; for glutamine hydrolysis is the cysteine 381. Residues 382 to 385 (LGMQ), glutamate 405, and arginine 462 each bind L-glutamine. Catalysis depends on residues histidine 507 and glutamate 509.

Belongs to the CTP synthase family. Homotetramer.

It carries out the reaction UTP + L-glutamine + ATP + H2O = CTP + L-glutamate + ADP + phosphate + 2 H(+). It catalyses the reaction L-glutamine + H2O = L-glutamate + NH4(+). The catalysed reaction is UTP + NH4(+) + ATP = CTP + ADP + phosphate + 2 H(+). Its pathway is pyrimidine metabolism; CTP biosynthesis via de novo pathway; CTP from UDP: step 2/2. Allosterically activated by GTP, when glutamine is the substrate; GTP has no effect on the reaction when ammonia is the substrate. The allosteric effector GTP functions by stabilizing the protein conformation that binds the tetrahedral intermediate(s) formed during glutamine hydrolysis. Inhibited by the product CTP, via allosteric rather than competitive inhibition. In terms of biological role, catalyzes the ATP-dependent amination of UTP to CTP with either L-glutamine or ammonia as the source of nitrogen. Regulates intracellular CTP levels through interactions with the four ribonucleotide triphosphates. The sequence is that of CTP synthase from Synechococcus sp. (strain JA-3-3Ab) (Cyanobacteria bacterium Yellowstone A-Prime).